Here is a 734-residue protein sequence, read N- to C-terminus: Photosystem I P700 chlorophyll a apoprotein A2 (734 aa).

Transmembrane regions (helical) follow at residues 46 to 69 (IFAS…FHVA), 135 to 158 (LYTG…FHLQ), 175 to 199 (LDHH…HVAI), 273 to 291 (IAHH…GHMY), 330 to 353 (LHFQ…QHMY), 369 to 395 (AALY…IFFI), 417 to 439 (AIIS…LYVH), and 517 to 535 (FLVH…LILV). Residues cysteine 559 and cysteine 568 each coordinate [4Fe-4S] cluster. Transmembrane regions (helical) follow at residues 575–596 (AFYL…YWHW) and 643–665 (LSVW…MFLI). Positions 654, 662, and 670 each coordinate chlorophyll a. Tryptophan 671 serves as a coordination point for phylloquinone. A helical membrane pass occupies residues 707 to 727 (LVGLAHFSVGYIFTYAAFLIA).

This sequence belongs to the PsaA/PsaB family. As to quaternary structure, the PsaA/B heterodimer binds the P700 chlorophyll special pair and subsequent electron acceptors. PSI consists of a core antenna complex that captures photons, and an electron transfer chain that converts photonic excitation into a charge separation. The eukaryotic PSI reaction center is composed of at least 11 subunits. It depends on P700 is a chlorophyll a/chlorophyll a' dimer, A0 is one or more chlorophyll a, A1 is one or both phylloquinones and FX is a shared 4Fe-4S iron-sulfur center. as a cofactor.

It localises to the plastid. Its subcellular location is the chloroplast thylakoid membrane. It carries out the reaction reduced [plastocyanin] + hnu + oxidized [2Fe-2S]-[ferredoxin] = oxidized [plastocyanin] + reduced [2Fe-2S]-[ferredoxin]. Functionally, psaA and PsaB bind P700, the primary electron donor of photosystem I (PSI), as well as the electron acceptors A0, A1 and FX. PSI is a plastocyanin-ferredoxin oxidoreductase, converting photonic excitation into a charge separation, which transfers an electron from the donor P700 chlorophyll pair to the spectroscopically characterized acceptors A0, A1, FX, FA and FB in turn. Oxidized P700 is reduced on the lumenal side of the thylakoid membrane by plastocyanin. This is Photosystem I P700 chlorophyll a apoprotein A2 from Cycas taitungensis (Prince sago).